A 1045-amino-acid chain; its full sequence is V(D)J recombination-activating protein 1 (1045 aa).

3 disordered regions span residues 33 to 55 (ERRP…QETY), 67 to 87 (LGSA…KSNV), and 222 to 253 (KRKS…SSGN). Composition is skewed to polar residues over residues 44-55 (SEVSYNSSQETY) and 69-87 (SAPQ…KSNV). Residues Cys-270, His-274, Cys-294, Cys-297, His-299, Cys-309, His-311, Cys-314, Cys-317, Cys-329, Cys-332, Cys-359, Cys-364, His-376, and His-380 each contribute to the Zn(2+) site. The segment at 294–333 (CLVCEHILSDPVQTSCKHLFCRICILKYIKLMGCYCPSCK) adopts an RING-type zinc-finger fold. An RAG1-type zinc finger spans residues 355–384 (LLLKCTVSGCDEEISLGKYSHHISKHKETK). Residues 395–462 (GGRPRQHLLT…QADELEAIME (68 aa)) constitute a DNA-binding region (NBD). Asp-606, Asp-714, and Glu-968 together coordinate a divalent metal cation.

Belongs to the RAG1 family. In terms of assembly, homodimer. Component of the RAG complex composed of core components rag1 and rag2. Requires Mg(2+) as cofactor. Mn(2+) serves as cofactor. In terms of tissue distribution, expressed within the thymus, liver and spleen in juvenile frogs, and within the thymus and bone marrow of adults.

It localises to the nucleus. It catalyses the reaction S-ubiquitinyl-[E2 ubiquitin-conjugating enzyme]-L-cysteine + [acceptor protein]-L-lysine = [E2 ubiquitin-conjugating enzyme]-L-cysteine + N(6)-ubiquitinyl-[acceptor protein]-L-lysine.. In terms of biological role, catalytic component of the RAG complex, a multiprotein complex that mediates the DNA cleavage phase during V(D)J recombination. V(D)J recombination assembles a diverse repertoire of immunoglobulin and T-cell receptor genes in developing B and T lymphocytes through rearrangement of different V (variable), in some cases D (diversity), and J (joining) gene segments. In the RAG complex, RAG1 mediates the DNA-binding to the conserved recombination signal sequences (RSS) and catalyzes the DNA cleavage activities by introducing a double-strand break between the RSS and the adjacent coding segment. RAG2 is not a catalytic component but is required for all known catalytic activities. DNA cleavage occurs in 2 steps: a first nick is introduced in the top strand immediately upstream of the heptamer, generating a 3'-hydroxyl group that can attack the phosphodiester bond on the opposite strand in a direct transesterification reaction, thereby creating 4 DNA ends: 2 hairpin coding ends and 2 blunt, 5'-phosphorylated ends. In addition to its endonuclease activity, RAG1 also acts as an E3 ubiquitin-protein ligase that mediates monoubiquitination of histone H3. Histone H3 monoubiquitination is required for the joining step of V(D)J recombination. In Xenopus laevis (African clawed frog), this protein is V(D)J recombination-activating protein 1 (rag1).